Reading from the N-terminus, the 163-residue chain is Ubiquitin-like protein 1-ribosomal protein eS31 fusion protein (163 aa).

Positions 1 to 70 (MVFVKTLNRT…IYVNLELLGG (70 aa)) constitute a Ubiquitin-like domain. Gly-70 participates in a covalent cross-link: Glycyl lysine isopeptide (Gly-Lys) (interchain with K-? in acceptor proteins). The segment at 115 to 138 (CQQPSCGGGVFMAQHANRHYCGRC) adopts a C4-type zinc-finger fold.

It in the N-terminal section; belongs to the ubiquitin family. The protein in the C-terminal section; belongs to the eukaryotic ribosomal protein eS31 family.

The polypeptide is Ubiquitin-like protein 1-ribosomal protein eS31 fusion protein (ubl-1) (Caenorhabditis briggsae).